Consider the following 336-residue polypeptide: N-acetyl-gamma-glutamyl-phosphate reductase (336 aa).

Residue cysteine 143 is part of the active site.

The protein belongs to the NAGSA dehydrogenase family. Type 1 subfamily.

The protein localises to the cytoplasm. The enzyme catalyses N-acetyl-L-glutamate 5-semialdehyde + phosphate + NADP(+) = N-acetyl-L-glutamyl 5-phosphate + NADPH + H(+). It participates in amino-acid biosynthesis; L-arginine biosynthesis; N(2)-acetyl-L-ornithine from L-glutamate: step 3/4. Functionally, catalyzes the NADPH-dependent reduction of N-acetyl-5-glutamyl phosphate to yield N-acetyl-L-glutamate 5-semialdehyde. In Dictyoglomus thermophilum (strain ATCC 35947 / DSM 3960 / H-6-12), this protein is N-acetyl-gamma-glutamyl-phosphate reductase.